A 32-amino-acid chain; its full sequence is Acatoxin 1 (32 aa).

Cystine bridges form between Cys1-Cys15, Cys8-Cys20, and Cys14-Cys26.

The protein resides in the secreted. It localises to the nematocyst. Functionally, reversibly inhibits acid-sensing ion channels (ASIC) in rat dorsal root ganglia neurons. Reversibly inhibits voltage-gated potassium channels (Kv) in rat DRG neurons. The polypeptide is Acatoxin 1 (Anthopleura cascaia (Sea anemone)).